The chain runs to 78 residues: Large ribosomal subunit protein bL28 (78 aa).

This sequence belongs to the bacterial ribosomal protein bL28 family.

This chain is Large ribosomal subunit protein bL28, found in Pectobacterium carotovorum subsp. carotovorum (strain PC1).